Reading from the N-terminus, the 94-residue chain is Large ribosomal subunit protein bL31 (94 aa).

Positions 65–94 (YGMADSENDSTDKKKTTNEKKVSDSPSKES) are disordered. Basic and acidic residues predominate over residues 74–94 (STDKKKTTNEKKVSDSPSKES).

The protein belongs to the bacterial ribosomal protein bL31 family. Type A subfamily. As to quaternary structure, part of the 50S ribosomal subunit.

Its function is as follows. Binds the 23S rRNA. The sequence is that of Large ribosomal subunit protein bL31 from Prochlorococcus marinus (strain MIT 9211).